The following is a 295-amino-acid chain: G1/S-specific cyclin-D1 (295 aa).

Positions 28 to 152 constitute a Cyclin N-terminal domain; it reads LRAMLKTEET…LLVNKLKWNL (125 aa). K269 participates in a covalent cross-link: Glycyl lysine isopeptide (Lys-Gly) (interchain with G-Cter in ubiquitin). Residues 269 to 295 are disordered; that stretch reads KATEEEGEVEEEAGLACTPTDVRDVDI. T286 is modified (phosphothreonine).

This sequence belongs to the cyclin family. Cyclin D subfamily. Interacts with either CDK4 or CDK6 protein kinase to form a serine/threonine kinase holoenzyme complex. The cyclin subunit imparts substrate specificity to the complex. Component of the ternary complex CCND1/CDK4/CDKN1B required for nuclear translocation and modulation of CDK4-mediated kinase activity. Interacts directly with CDKN1B. Can form similar complexes with either CDKN1A or CDKN2A. Interacts with UHRF2; the interaction ubiquitinates CCND1 and appears to occur independently of phosphorylation. Interacts with USP2. Interacts (via cyclin N-terminal domain) with INSM1 (via N-terminal region); the interaction competes with the binding of CCND1 to CDK4 during cell cycle progression and inhibits CDK4 activity. Interacts with CDK4; the interaction is prevented with the binding of CCND1 to INSM1 during cell cycle progression. Phosphorylation at Thr-286 by MAP kinases is required for ubiquitination and degradation by the DCX(AMBRA1) complex. It also plays an essential role for recognition by the FBXO31 component of SCF (SKP1-cullin-F-box) protein ligase complex following DNA damage. In terms of processing, ubiquitinated at Lys-269 by the DCX(AMBRA1) complex during the transition from G1 to S cell phase, leading to its degradation: ubiquitination is dependent on Thr-286 phosphorylation. The DCX(AMBRA1) complex represents the major regulator of CCND1 stability during the G1/S transition. Also ubiquitinated by the SCF(FBXO4) and Cul7-RING(FBXW8) ubiquitin-protein ligase complexes. Following DNA damage it is ubiquitinated by the SCF(FBXO31) protein ligase complex. SCF(FBXO31) ubiquitination is dependent on Thr-286 phosphorylation. Ubiquitinated also by UHRF2 apparently in a phosphorylation-independent manner. Ubiquitination leads to its degradation and G1 arrest. Deubiquitinated by USP2; leading to its stabilization.

The protein localises to the nucleus. It localises to the cytoplasm. Its subcellular location is the nucleus membrane. Regulatory component of the cyclin D1-CDK4 (DC) complex that phosphorylates and inhibits members of the retinoblastoma (RB) protein family including RB1 and regulates the cell-cycle during G(1)/S transition. Phosphorylation of RB1 allows dissociation of the transcription factor E2F from the RB/E2F complex and the subsequent transcription of E2F target genes which are responsible for the progression through the G(1) phase. Hypophosphorylates RB1 in early G(1) phase. Cyclin D-CDK4 complexes are major integrators of various mitogenenic and antimitogenic signals. Also a substrate for SMAD3, phosphorylating SMAD3 in a cell-cycle-dependent manner and repressing its transcriptional activity. Component of the ternary complex, cyclin D1/CDK4/CDKN1B, required for nuclear translocation and activity of the cyclin D-CDK4 complex. Exhibits transcriptional corepressor activity with INSM1 on the NEUROD1 and INS promoters in a cell cycle-independent manner. This Rattus norvegicus (Rat) protein is G1/S-specific cyclin-D1 (Ccnd1).